The following is a 251-amino-acid chain: Triosephosphate isomerase (251 aa).

9–11 contributes to the substrate binding site; it reads NWK. The Electrophile role is filled by His-95. The active-site Proton acceptor is the Glu-167. Substrate-binding positions include Gly-173, Ser-212, and 233 to 234; that span reads GG.

The protein belongs to the triosephosphate isomerase family. Homodimer.

It localises to the cytoplasm. The catalysed reaction is D-glyceraldehyde 3-phosphate = dihydroxyacetone phosphate. It functions in the pathway carbohydrate biosynthesis; gluconeogenesis. It participates in carbohydrate degradation; glycolysis; D-glyceraldehyde 3-phosphate from glycerone phosphate: step 1/1. Functionally, involved in the gluconeogenesis. Catalyzes stereospecifically the conversion of dihydroxyacetone phosphate (DHAP) to D-glyceraldehyde-3-phosphate (G3P). This is Triosephosphate isomerase from Pseudomonas savastanoi pv. phaseolicola (strain 1448A / Race 6) (Pseudomonas syringae pv. phaseolicola (strain 1448A / Race 6)).